Reading from the N-terminus, the 408-residue chain is Na(+)-translocating NADH-quinone reductase subunit F (408 aa).

Residues 4-24 (IYLGVGMFIAIVLALVLIIMF) traverse the membrane as a helical segment. The 2Fe-2S ferredoxin-type domain occupies 33-127 (GEVTISINGD…DMDIELPEEI (95 aa)). [2Fe-2S] cluster is bound by residues cysteine 70, cysteine 76, cysteine 79, and cysteine 111. The FAD-binding FR-type domain occupies 130-270 (IKKWDCEVIS…SGPFGEFFAK (141 aa)).

It belongs to the NqrF family. Composed of six subunits; NqrA, NqrB, NqrC, NqrD, NqrE and NqrF. [2Fe-2S] cluster is required as a cofactor. Requires FAD as cofactor.

It is found in the cell inner membrane. It carries out the reaction a ubiquinone + n Na(+)(in) + NADH + H(+) = a ubiquinol + n Na(+)(out) + NAD(+). Its function is as follows. NQR complex catalyzes the reduction of ubiquinone-1 to ubiquinol by two successive reactions, coupled with the transport of Na(+) ions from the cytoplasm to the periplasm. The first step is catalyzed by NqrF, which accepts electrons from NADH and reduces ubiquinone-1 to ubisemiquinone by a one-electron transfer pathway. The protein is Na(+)-translocating NADH-quinone reductase subunit F of Pseudoalteromonas atlantica (strain T6c / ATCC BAA-1087).